The sequence spans 371 residues: Chorismate synthase (371 aa).

2 residues coordinate NADP(+): Arg-48 and Arg-54. FMN-binding positions include 131-133 (RSS), 245-246 (NA), Gly-290, 305-309 (KPTSS), and Arg-331.

Belongs to the chorismate synthase family. Homotetramer. FMNH2 serves as cofactor.

It catalyses the reaction 5-O-(1-carboxyvinyl)-3-phosphoshikimate = chorismate + phosphate. The protein operates within metabolic intermediate biosynthesis; chorismate biosynthesis; chorismate from D-erythrose 4-phosphate and phosphoenolpyruvate: step 7/7. In terms of biological role, catalyzes the anti-1,4-elimination of the C-3 phosphate and the C-6 proR hydrogen from 5-enolpyruvylshikimate-3-phosphate (EPSP) to yield chorismate, which is the branch point compound that serves as the starting substrate for the three terminal pathways of aromatic amino acid biosynthesis. This reaction introduces a second double bond into the aromatic ring system. This Mesorhizobium japonicum (strain LMG 29417 / CECT 9101 / MAFF 303099) (Mesorhizobium loti (strain MAFF 303099)) protein is Chorismate synthase.